Reading from the N-terminus, the 198-residue chain is MIISAKFITSLVKFDENLSSNFSEVAFLGRSNVGKSSLINSLCKQKNLAKSSATPGKTQLINFFEVICRRNEEKFNINFIDLPGFGYAKVSKNLKEIWNQNLDEFLKLRTSIKLFIHLIDSRHTHLEIDVNLNDYLKRFLRPDQKILKVFTKCDKLNQSEKAKLKNEFKDSILVSNLNKFGLDSLEDIIINQTLGLDK.

In terms of domain architecture, EngB-type G spans 21 to 195 (NFSEVAFLGR…EDIIINQTLG (175 aa)). GTP is bound by residues 29–36 (GRSNVGKS), 56–60 (GKTQL), 81–84 (DLPG), 151–154 (TKCD), and 174–176 (VSN). Residues Ser36 and Thr58 each coordinate Mg(2+).

Belongs to the TRAFAC class TrmE-Era-EngA-EngB-Septin-like GTPase superfamily. EngB GTPase family. Mg(2+) serves as cofactor.

Necessary for normal cell division and for the maintenance of normal septation. The protein is Probable GTP-binding protein EngB of Campylobacter jejuni subsp. jejuni serotype O:2 (strain ATCC 700819 / NCTC 11168).